Consider the following 433-residue polypeptide: Succinate--CoA ligase [GDP-forming] subunit beta, mitochondrial (433 aa).

Residues 1 to 38 constitute a mitochondrion transit peptide; that stretch reads IPAAPVAAQARKLLRDLAFRPPLLAARSQVVQLTPRRW. The ATP-grasp domain occupies 47–275; the sequence is KKLMSDNGVK…NAEFRQKDIF (229 aa). Gln58 lines the GTP pocket. Lys74 carries the N6-acetyllysine modification. The residue at position 79 (Lys79) is an N6-succinyllysine. 91–93 is a GTP binding site; sequence GRG. N6-acetyllysine is present on residues Lys133 and Lys140. GTP is bound at residue Leu147. Position 162 is a phosphoserine (Ser162). N6-acetyllysine is present on residues Lys201 and Lys228. Residues Asn244 and Asp258 each coordinate Mg(2+). Residues Lys272 and Lys292 each carry the N6-acetyllysine modification. Asn309 lines the substrate pocket. An N6-succinyllysine modification is found at Lys339. Lys348 is subject to N6-acetyllysine. Position 366–368 (366–368) interacts with substrate; it reads GIV. N6-acetyllysine occurs at positions 387 and 424.

The protein belongs to the succinate/malate CoA ligase beta subunit family. GTP-specific subunit beta subfamily. In terms of assembly, heterodimer of an alpha and a beta subunit. The beta subunit determines specificity for GTP. Requires Mg(2+) as cofactor.

It localises to the mitochondrion. It carries out the reaction GTP + succinate + CoA = succinyl-CoA + GDP + phosphate. It participates in carbohydrate metabolism; tricarboxylic acid cycle; succinate from succinyl-CoA (ligase route): step 1/1. GTP-specific succinyl-CoA synthetase functions in the citric acid cycle (TCA), coupling the hydrolysis of succinyl-CoA to the synthesis of GTP and thus represents the only step of substrate-level phosphorylation in the TCA. The beta subunit provides nucleotide specificity of the enzyme and binds the substrate succinate, while the binding sites for coenzyme A and phosphate are found in the alpha subunit. In Sus scrofa (Pig), this protein is Succinate--CoA ligase [GDP-forming] subunit beta, mitochondrial.